The chain runs to 160 residues: Ribosomal RNA large subunit methyltransferase H (160 aa).

S-adenosyl-L-methionine-binding positions include Leu77, Gly109, and 128–133 (LSNLTF).

Belongs to the RNA methyltransferase RlmH family. As to quaternary structure, homodimer.

Its subcellular location is the cytoplasm. The catalysed reaction is pseudouridine(1915) in 23S rRNA + S-adenosyl-L-methionine = N(3)-methylpseudouridine(1915) in 23S rRNA + S-adenosyl-L-homocysteine + H(+). Functionally, specifically methylates the pseudouridine at position 1915 (m3Psi1915) in 23S rRNA. The polypeptide is Ribosomal RNA large subunit methyltransferase H (Desulforamulus reducens (strain ATCC BAA-1160 / DSM 100696 / MI-1) (Desulfotomaculum reducens)).